The following is a 400-amino-acid chain: Sensory histidine kinase/phosphatase NtrB (400 aa).

Composition is skewed to low complexity over residues 1 to 10 (MARASAAAPL) and 18 to 27 (RAPSSSYRPV). The interval 1-27 (MARASAAAPLPRRPARPRAPSSSYRPV) is disordered. Residues 29-99 (PCIDPSVMLN…IEQVQQGRHR (71 aa)) enclose the PAS domain. In terms of domain architecture, Histidine kinase spans 163–381 (MLGHEVKNPL…VFKVSLPMFD (219 aa)). The residue at position 166 (His-166) is a Phosphohistidine; by autocatalysis.

In terms of processing, autophosphorylated.

It localises to the cytoplasm. It carries out the reaction ATP + protein L-histidine = ADP + protein N-phospho-L-histidine.. Member of the two-component regulatory system NtrB/NtrC, which controls expression of the nitrogen-regulated (ntr) genes in response to nitrogen limitation. Under conditions of nitrogen limitation, NtrB autophosphorylates and transfers the phosphoryl group to NtrC. In the presence of nitrogen, acts as a phosphatase that dephosphorylates and inactivates NtrC. In Azospirillum brasilense, this protein is Sensory histidine kinase/phosphatase NtrB.